A 941-amino-acid polypeptide reads, in one-letter code: ATP-dependent 6-phosphofructokinase subunit beta (941 aa).

The interval 2–558 (PDASLFNGTS…HMKNFISTNS (557 aa)) is N-terminal catalytic PFK domain 1. ATP is bound by residues Gly-191, 255 to 256 (RC), and 285 to 288 (GDGS). A Mg(2+)-binding site is contributed by Asp-286. Beta-D-fructose 6-phosphate is bound by residues 331–333 (SID), Arg-368, 375–377 (MGR), Glu-432, Arg-460, and 466–469 (HVQR). Residue Asp-333 is the Proton acceptor of the active site. The interval 559 to 572 (ADHVPPSLPLEKRK) is interdomain linker. Residues 573 to 941 (KVAIINVGAP…SDMLSGRTSL (369 aa)) form a C-terminal regulatory PFK domain 2 region. Beta-D-fructose 2,6-bisphosphate-binding positions include Arg-643, 701 to 705 (TISNN), Arg-739, 746 to 748 (QGG), Glu-806, Lys-832, 838 to 841 (HVQQ), and Arg-918.

It belongs to the phosphofructokinase type A (PFKA) family. ATP-dependent PFK group I subfamily. Eukaryotic two domain clade 'E' sub-subfamily. As to quaternary structure, heterododecamer of 4 alpha, 4 beta and 4 gamma chains. The gamma chain bridges the N-terminal halves of the alpha and beta subunits. Mg(2+) serves as cofactor.

It localises to the cytoplasm. The enzyme catalyses beta-D-fructose 6-phosphate + ATP = beta-D-fructose 1,6-bisphosphate + ADP + H(+). The protein operates within carbohydrate degradation; glycolysis; D-glyceraldehyde 3-phosphate and glycerone phosphate from D-glucose: step 3/4. With respect to regulation, allosterically activated by ADP, AMP, or fructose 2,6-bisphosphate, and allosterically inhibited by ATP or citrate. Functionally, catalyzes the phosphorylation of D-fructose 6-phosphate to fructose 1,6-bisphosphate by ATP, the first committing step of glycolysis. The protein is ATP-dependent 6-phosphofructokinase subunit beta (PFK2) of Komagataella phaffii (strain GS115 / ATCC 20864) (Yeast).